The following is a 379-amino-acid chain: UDP-4-amino-4-deoxy-L-arabinose--oxoglutarate aminotransferase (379 aa).

K182 carries the N6-(pyridoxal phosphate)lysine modification.

This sequence belongs to the DegT/DnrJ/EryC1 family. ArnB subfamily. As to quaternary structure, homodimer. Requires pyridoxal 5'-phosphate as cofactor.

It carries out the reaction UDP-4-amino-4-deoxy-beta-L-arabinose + 2-oxoglutarate = UDP-beta-L-threo-pentopyranos-4-ulose + L-glutamate. It participates in nucleotide-sugar biosynthesis; UDP-4-deoxy-4-formamido-beta-L-arabinose biosynthesis; UDP-4-deoxy-4-formamido-beta-L-arabinose from UDP-alpha-D-glucuronate: step 2/3. It functions in the pathway bacterial outer membrane biogenesis; lipopolysaccharide biosynthesis. Its function is as follows. Catalyzes the conversion of UDP-4-keto-arabinose (UDP-Ara4O) to UDP-4-amino-4-deoxy-L-arabinose (UDP-L-Ara4N). The modified arabinose is attached to lipid A and is required for resistance to polymyxin and cationic antimicrobial peptides. This chain is UDP-4-amino-4-deoxy-L-arabinose--oxoglutarate aminotransferase, found in Escherichia coli O157:H7.